A 466-amino-acid chain; its full sequence is Vimentin (466 aa).

2 stretches are compositionally biased toward low complexity: residues 1-13 (MSTR…SYRR) and 20-33 (TSSR…YVTT). Residues 1-33 (MSTRSVSSSSYRRMFGGSGTSSRPSSNRSYVTT) are disordered. Residue S2 is modified to N-acetylserine. Residues 2–95 (STRSVSSSSY…FSLADAINTE (94 aa)) form a head region. Phosphoserine is present on S5. The residue at position 7 (S7) is a Phosphoserine; by PKA and PKC; alternate. Residue S7 is glycosylated (O-linked (GlcNAc) serine; alternate). A Phosphoserine modification is found at S8. Residues S9 and S10 each carry the phosphoserine; by PKC modification. T20 carries the post-translational modification Phosphothreonine. Phosphoserine is present on residues S25 and S26. O-linked (GlcNAc) threonine glycosylation occurs at T33. O-linked (GlcNAc) serine; alternate glycosylation is present at S34. A Phosphoserine; by PKC; alternate modification is found at S34. The residue at position 39 (S39) is a Phosphoserine; by CaMK2, PKA, PKC and ROCK2. S42 is subject to Phosphoserine; by PKC. The residue at position 47 (S47) is a Phosphoserine; by PKA. A phosphoserine mark is found at S49 and S51. The residue at position 53 (Y53) is a Phosphotyrosine. Phosphoserine is present on residues S55 and S56. Residue Y61 is modified to Phosphotyrosine. Position 66 is a phosphoserine; by PKA and PKC (S66). S72 bears the Phosphoserine; by AURKB and ROCK2 mark. 3 positions are modified to phosphoserine: S73, S83, and S87. The coil 1A stretch occupies residues 96 to 131 (FKNTRTNEKVELQELNDRFANYIDKVRFLEQQNKIL). Residues 96–131 (FKNTRTNEKVELQELNDRFANYIDKVRFLEQQNKIL) are a coiled coil. The region spanning 103–411 (EKVELQELND…KLLEGEESRI (309 aa)) is the IF rod domain. K104 participates in a covalent cross-link: Glycyl lysine isopeptide (Lys-Gly) (interchain with G-Cter in SUMO2). Y117 is modified (phosphotyrosine). An N6-acetyllysine; alternate mark is found at K120, K129, and K139. K120 and K129 each carry N6-succinyllysine; alternate. Residues K120, K129, and K139 each participate in a glycyl lysine isopeptide (Lys-Gly) (interchain with G-Cter in SUMO2); alternate cross-link. The tract at residues 132–153 (LAELEQLKGQGKSRLGDLYEEE) is linker 1. S144 is modified (phosphoserine). The stretch at 154-245 (MRELRRQVDQ…KLHDEEIQEL (92 aa)) forms a coiled coil. The segment at 154 to 245 (MRELRRQVDQ…KLHDEEIQEL (92 aa)) is coil 1B. Residue K168 is modified to N6-acetyllysine. An N6-acetyllysine; alternate modification is found at K188. K188 carries the post-translational modification N6-succinyllysine; alternate. A Phosphoserine modification is found at S214. An N6-acetyllysine; alternate modification is found at K223. Residue K223 forms a Glycyl lysine isopeptide (Lys-Gly) (interchain with G-Cter in SUMO2); alternate linkage. S226 carries the post-translational modification Phosphoserine. K235 is modified (N6-acetyllysine). The linker 12 stretch occupies residues 246-268 (QAQIQEQHVQIDVDVSKPDLTAA). A Glycyl lysine isopeptide (Lys-Gly) (interchain with G-Cter in SUMO2) cross-link involves residue K262. Residues 269–407 (LRDVRQQYES…ATYRKLLEGE (139 aa)) form a coil 2 region. Residue K294 is modified to N6-acetyllysine; alternate. K294 carries the post-translational modification N6-succinyllysine; alternate. Residue K294 forms a Glycyl lysine isopeptide (Lys-Gly) (interchain with G-Cter in SUMO2); alternate linkage. A Phosphoserine modification is found at S299. Residues 303–407 (NRNNDALRQA…ATYRKLLEGE (105 aa)) are a coiled coil. Residue K313 forms a Glycyl lysine isopeptide (Lys-Gly) (interchain with G-Cter in SUMO2) linkage. S325 bears the Phosphoserine mark. The [IL]-x-C-x-x-[DE] motif signature appears at 326 to 329 (LTCE). Position 373 is an N6-acetyllysine; alternate (K373). K373 is covalently cross-linked (Glycyl lysine isopeptide (Lys-Gly) (interchain with G-Cter in SUMO2); alternate). Residues 408 to 466 (ESRISLPLPNFSSLNLRETNLESLPLVDTHSKRTLLIKTVETRDGQVINETSQHHDDLE) are tail. S409, S412, S419, and S420 each carry phosphoserine. A Phosphothreonine modification is found at T426. S430 is subject to Phosphoserine. T436 carries the post-translational modification Phosphothreonine. S438 is modified (phosphoserine). K439 is covalently cross-linked (Glycyl lysine isopeptide (Lys-Gly) (interchain with G-Cter in SUMO2)). An N6-acetyllysine; alternate modification is found at K445. Position 445 is an N6-succinyllysine; alternate (K445). K445 participates in a covalent cross-link: Glycyl lysine isopeptide (Lys-Gly) (interchain with G-Cter in SUMO2); alternate. K445 is covalently cross-linked (Glycyl lysine isopeptide (Lys-Gly) (interchain with G-Cter in SUMO1); alternate). T446 and T458 each carry phosphothreonine. A Phosphoserine modification is found at S459.

This sequence belongs to the intermediate filament family. As to quaternary structure, homomer assembled from elementary dimers. Identified in complexes that contain VIM, EZR, AHNAK, BFSP1, BFSP2, ANK2, PLEC, PRX and spectrin. Interacts with BCAS3. Interacts with LGSN. Interacts with SYNM. Interacts (via rod region) with PLEC (via CH 1 domain). Interacts with STK33. Interacts with LARP6. Interacts with RAB8B. Interacts with TOR1A; the interaction associates TOR1A with the cytoskeleton. Interacts with TOR1AIP1. Interacts with TOR1AIP1. Interacts with DIAPH1. Interacts with EPPK1; interaction is dependent of higher-order structure of intermediate filament. Interacts with the non-receptor tyrosine kinase SRMS; the interaction leads to phosphorylation of VIM. Interacts with NOD2. Interacts (via head region) with CORO1C. Interacts with HDGF. Interacts with PRKCE (via phorbol-ester/DAG-type 2 domain). Interacts with BFSP2. Interacts with PPL. Interacts with PKP1 and PKP2. Interacts with SCRIB (via PDZ domains); the interaction protects SCRIB from proteasomal degradation and facilitates SCRIB localization to intermediate filaments, the interaction is reduced by cell contact inhibition. One of the most prominent phosphoproteins in various cells of mesenchymal origin. Phosphorylation is enhanced during cell division, at which time vimentin filaments are significantly reorganized. Phosphorylation by PKN1 inhibits the formation of filaments. Filament disassembly during mitosis is promoted by phosphorylation at Ser-55 as well as by nestin. Phosphorylated at Ser-56 by CDK5 during neutrophil secretion in the cytoplasm. Phosphorylated by STK33. Phosphorylated on tyrosine residues by SRMS. In terms of processing, S-nitrosylation is induced by interferon-gamma and oxidatively-modified low-densitity lipoprotein (LDL(ox)) possibly implicating the iNOS-S100A8/9 transnitrosylase complex.

The protein localises to the cytoplasm. The protein resides in the cytoskeleton. It localises to the nucleus matrix. Its subcellular location is the cell membrane. Its function is as follows. Vimentins are class-III intermediate filaments found in various non-epithelial cells, especially mesenchymal cells. Vimentin is attached to the nucleus, endoplasmic reticulum, and mitochondria, either laterally or terminally. Plays a role in cell directional movement, orientation, cell sheet organization and Golgi complex polarization at the cell migration front. Protects SCRIB from proteasomal degradation and facilitates its localization to intermediate filaments in a cell contact-mediated manner. In terms of biological role, involved with LARP6 in the stabilization of type I collagen mRNAs for CO1A1 and CO1A2. This chain is Vimentin, found in Rattus norvegicus (Rat).